The following is a 264-amino-acid chain: Type 1 encapsulin shell protein (264 aa).

This sequence belongs to the encapsulin family. Family 1 subfamily. In terms of assembly, forms hollow shells composed of 60 subunits. Monomers probably form pentamers which assemble into the shell. There are 12 pores where the pentamers meet as well as 3-fold axis channels and dimer channels; none are larger than 3-4 Angstroms in diameter. The N-terminus of the protein is inside the shell, the C-terminus is outside.

The protein resides in the encapsulin nanocompartment. Its function is as follows. Shell component of a type 1 encapsulin nanocompartment. Assembles into proteinaceous shells 21-24 nm in diameter. Empty organelles can be expressed in E.coli. Cargo proteins (DypB) are targeted to the interior via their C-terminal extensions. In Rhodococcus erythropolis (strain PR4 / NBRC 100887), this protein is Type 1 encapsulin shell protein.